A 215-amino-acid polypeptide reads, in one-letter code: Outer-membrane lipoprotein LolB (215 aa).

Residues 1 to 19 (MSKLRKITSLIFLTIIMVG) form the signal peptide. Cys20 carries the N-palmitoyl cysteine lipid modification. Cys20 carries the S-diacylglycerol cysteine lipid modification.

This sequence belongs to the LolB family. As to quaternary structure, monomer.

Its subcellular location is the cell outer membrane. Plays a critical role in the incorporation of lipoproteins in the outer membrane after they are released by the LolA protein. This is Outer-membrane lipoprotein LolB from Vibrio atlanticus (strain LGP32) (Vibrio splendidus (strain Mel32)).